The chain runs to 294 residues: Very long chain fatty acid elongase 5 (294 aa).

7 helical membrane-spanning segments follow: residues 26–46 (WLLL…LLIV), 64–84 (ILVV…YELV), 112–132 (VLWW…FFIL), 141–161 (FLHI…MNWV), 172–192 (FNSF…IPAI), 207–227 (LVQF…PCGF), and 231–251 (WLYF…NFYI). The interval 261–294 (AKKDPRHNGIKSVNGHSNGASHTNAVKNRKARTD) is disordered. Positions 274-286 (NGHSNGASHTNAV) are enriched in polar residues.

It belongs to the ELO family. ELOVL5 subfamily. As to expression, expression is highest in intestine, followed by brain and heart, and lowest in gill. Also expressed in liver, spleen and muscle.

Its subcellular location is the endoplasmic reticulum membrane. It is found in the cell projection. It localises to the dendrite. It carries out the reaction a very-long-chain acyl-CoA + malonyl-CoA + H(+) = a very-long-chain 3-oxoacyl-CoA + CO2 + CoA. The enzyme catalyses (6Z,9Z,12Z)-octadecatrienoyl-CoA + malonyl-CoA + H(+) = (8Z,11Z,14Z)-3-oxoeicosatrienoyl-CoA + CO2 + CoA. The catalysed reaction is (9Z,12Z,15Z)-octadecatrienoyl-CoA + malonyl-CoA + H(+) = (11Z,14Z,17Z)-3-oxoeicosatrienoyl-CoA + CO2 + CoA. It catalyses the reaction (9Z)-hexadecenoyl-CoA + malonyl-CoA + H(+) = 3-oxo-(11Z)-octadecenoyl-CoA + CO2 + CoA. It carries out the reaction (9Z)-octadecenoyl-CoA + malonyl-CoA + H(+) = 3-oxo-(11Z)-eicosenoyl-CoA + CO2 + CoA. The enzyme catalyses (11Z)-octadecenoyl-CoA + malonyl-CoA + H(+) = 3-oxo-(13Z)-eicosenoyl-CoA + CO2 + CoA. The catalysed reaction is (9Z,12Z)-octadecadienoyl-CoA + malonyl-CoA + H(+) = (11Z,14Z)-3-oxoicosa-11,14-dienoyl-CoA + CO2 + CoA. It catalyses the reaction (6Z,9Z,12Z,15Z)-octadecatetraenoyl-CoA + malonyl-CoA + H(+) = (8Z,11Z,14Z,17Z)-3-oxoicosatetraenoyl-CoA + CO2 + CoA. It carries out the reaction (5Z,8Z,11Z,14Z)-eicosatetraenoyl-CoA + malonyl-CoA + H(+) = (7Z,10Z,13Z,16Z)-3-oxodocosatetraenoyl-CoA + CO2 + CoA. The enzyme catalyses (5Z,8Z,11Z,14Z,17Z)-eicosapentaenoyl-CoA + malonyl-CoA + H(+) = 3-oxo-(7Z,10Z,13Z,16Z,19Z)-docosapentaenoyl-CoA + CO2 + CoA. The protein operates within lipid metabolism; polyunsaturated fatty acid biosynthesis. Catalyzes the first and rate-limiting reaction of the four reactions that constitute the long-chain fatty acids elongation cycle. This endoplasmic reticulum-bound enzymatic process allows the addition of 2 carbons to the chain of long- and very long-chain fatty acids (VLCFAs) per cycle. Condensing enzyme that acts specifically toward polyunsaturated acyl-CoA with the higher activity toward C18:3(n-6) acyl-CoA. May participate in the production of monounsaturated and of polyunsaturated VLCFAs of different chain lengths that are involved in multiple biological processes as precursors of membrane lipids and lipid mediators. In conditions where the essential linoleic and alpha linoleic fatty acids are lacking it is also involved in the synthesis of Mead acid from oleic acid. The protein is Very long chain fatty acid elongase 5 of Tachysurus fulvidraco (Yellow catfish).